The sequence spans 318 residues: Cyclic AMP receptor-like protein F (318 aa).

Topologically, residues 1–3 (MKD) are extracellular. Residues 4-24 (IILIYMICAPISMIGSLFIII) form a helical membrane-spanning segment. Residues 25–38 (TWLLYAKLKNSGSN) are Cytoplasmic-facing. Residues 39–59 (FIFFQAISDFFFTSKYIITII) form a helical membrane-spanning segment. The Extracellular portion of the chain corresponds to 60-83 (FYYINIPQFSDETSSTDTNPYCFS). A disulfide bond links Cys-81 and Cys-177. The chain crosses the membrane as a helical span at residues 84 to 104 (LGLFSQFFGQATIMWSYTMTV). The Cytoplasmic segment spans residues 105-145 (KVFHSYFEMKKKNNNNNIGSNNIGGGGGGNNSNKQNSIDKT). The helical transmembrane segment at 146–166 (LKWYHLFVWGFCLVNATIIGI) threads the bilayer. The Extracellular portion of the chain corresponds to 167–187 (SKQYGPSSTGCWIVGANNPYR). A helical membrane pass occupies residues 188–208 (FFELVPLYFTITTSIIILILI). The Cytoplasmic segment spans residues 209–234 (LVKMKKSKPSSLLPTESMRYNQQARE). A helical transmembrane segment spans residues 235-255 (FKIQLMKFVLIFIIFWLPATV). The Extracellular portion of the chain corresponds to 256-267 (LRTLEYFGIEKT). The chain crosses the membrane as a helical span at residues 268–288 (FFILLDAVSVSLQALANSLVW). At 289–318 (ATSPQFLKLMKRKVVNKPNKQMEREYLINK) the chain is on the cytoplasmic side.

Belongs to the G-protein coupled receptor 5 family.

The protein localises to the membrane. Functionally, receptor for cAMP. The sequence is that of Cyclic AMP receptor-like protein F (crlF) from Dictyostelium discoideum (Social amoeba).